The following is a 208-amino-acid chain: Uracil phosphoribosyltransferase (208 aa).

Residues R78, R103, and 130–138 each bind 5-phospho-alpha-D-ribose 1-diphosphate; that span reads DPMLATGGT. Uracil is bound by residues I193 and 198–200; that span reads GDA. A 5-phospho-alpha-D-ribose 1-diphosphate-binding site is contributed by D199.

It belongs to the UPRTase family. Mg(2+) is required as a cofactor.

It catalyses the reaction UMP + diphosphate = 5-phospho-alpha-D-ribose 1-diphosphate + uracil. Its pathway is pyrimidine metabolism; UMP biosynthesis via salvage pathway; UMP from uracil: step 1/1. With respect to regulation, allosterically activated by GTP. Catalyzes the conversion of uracil and 5-phospho-alpha-D-ribose 1-diphosphate (PRPP) to UMP and diphosphate. The chain is Uracil phosphoribosyltransferase from Maridesulfovibrio salexigens (strain ATCC 14822 / DSM 2638 / NCIMB 8403 / VKM B-1763) (Desulfovibrio salexigens).